Consider the following 291-residue polypeptide: 4-hydroxy-tetrahydrodipicolinate synthase (291 aa).

Thr-44 is a pyruvate binding site. The Proton donor/acceptor role is filled by Tyr-132. The active-site Schiff-base intermediate with substrate is the Lys-160. Residue Ile-202 coordinates pyruvate.

The protein belongs to the DapA family. As to quaternary structure, homotetramer; dimer of dimers.

The protein resides in the cytoplasm. It catalyses the reaction L-aspartate 4-semialdehyde + pyruvate = (2S,4S)-4-hydroxy-2,3,4,5-tetrahydrodipicolinate + H2O + H(+). Its pathway is amino-acid biosynthesis; L-lysine biosynthesis via DAP pathway; (S)-tetrahydrodipicolinate from L-aspartate: step 3/4. Catalyzes the condensation of (S)-aspartate-beta-semialdehyde [(S)-ASA] and pyruvate to 4-hydroxy-tetrahydrodipicolinate (HTPA). The sequence is that of 4-hydroxy-tetrahydrodipicolinate synthase from Syntrophus aciditrophicus (strain SB).